The following is a 140-amino-acid chain: Large ribosomal subunit protein uL14 (140 aa).

Belongs to the universal ribosomal protein uL14 family. As to quaternary structure, component of the large ribosomal subunit.

It localises to the cytoplasm. In terms of biological role, component of the large ribosomal subunit. The ribosome is a large ribonucleoprotein complex responsible for the synthesis of proteins in the cell. The chain is Large ribosomal subunit protein uL14 (rpl23) from Ictalurus punctatus (Channel catfish).